Consider the following 471-residue polypeptide: MGEQTEFEPIQLSPLDQAIPPVYIRILLCFSVVNVDRAISQLQTGVSSLLSALPFLSGDVVRYTAPGKTKWLYQLCPPTHQVQATGVLVVKHHQMRCMVDEKRFAPSSTSHIPLSPFAEPARPAPIFRVQANAYIDGITLGFAFHHIAVDATGMGVIISELARHCRSSPPPSLLCPDYERATRQLISNSRATECSGLDHSGDYISCQALSPPAEGSEDASPSIEISTETRTFVFPAARLESLKNACIEMLPTLDQQQRQQNPCLDEPARTKVPWLSTNDVFVALLWVCLTRCRYQEDQNSGLPSDEHTRICMGVNMRSRIQPPLSADYLGNAILSLSFKLNVNVFRRTQVTNESIEGVDSKDIEHKQWLATICRVARNIRRGVNGMDDSYFRSVVSFLEDSSDCRLFDYARCDFCVPSWRHLCVYHADFGEMGRPKSLEVFDVPGDGSFCILPQHYGAAAPWELLLGLLKA.

Belongs to the fumigaclavine B O-acetyltransferase family. In terms of assembly, monomer.

It catalyses the reaction dideacetyl astellolide A + acetyl-CoA = 14-deacetyl astellolide A + CoA. The enzyme catalyses dideacetyl astellolide B + acetyl-CoA = 14-deacetyl astellolide B + CoA. It functions in the pathway secondary metabolite biosynthesis; terpenoid biosynthesis. In terms of biological role, O-acetyltransferase; part of the gene cluster that mediates the biosynthesis of astellolides, drimane-type sesquiterpene esters that show antimicrobial, anti-inflammatory, and anti-tumor activities. The first step in astellolide biosynthesis is performed by the sesquiterpene cyclase astC that catalyzes the formation of drimanyl pyrophosphate from farnesyl pyrophosphate. Drimanyl pyrophosphate is then dephosphorylated by the sesquiterpene phosphatase astI to produce drimanyl monophosphate which is further dephosphorylated to drim-8-ene-11-ol by atsK. Drim-8-ene-11-ol is converted to confertifolin, probably by the cytochrome P450 monooxygenase astD and/or the dehydrogenase astE. The cytochrome P450 monooxygenases astB, astF and astJ then hydroxylate confertifolin at C6, C14, or C15 to form trihydroxy confertifolin. The nonribosomal peptide synthetase astA catalyzes ester bond formation between trihydroxy contifolin and benzoic acid (BA) or 4-hydroxy benzoic acid (4HBA), leading to the formation of dideacetyl astellolides A and B, respectively. Finally, the O-acetyltransferase astG converts dideacetyl astellolides A and B into deacetyl astellolides A and B. This Aspergillus oryzae (strain ATCC 42149 / RIB 40) (Yellow koji mold) protein is O-acetyltransferase astG.